Reading from the N-terminus, the 146-residue chain is Transcriptional regulator MraZ (146 aa).

SpoVT-AbrB domains follow at residues 7–54 and 83–126; these read NATN…GLDL and GVFV…QPEA.

The protein belongs to the MraZ family. Forms oligomers.

Its subcellular location is the cytoplasm. It is found in the nucleoid. This Rhizobium rhizogenes (strain K84 / ATCC BAA-868) (Agrobacterium radiobacter) protein is Transcriptional regulator MraZ.